The sequence spans 474 residues: Bifunctional protein HldE (474 aa).

Residues 1-321 form a ribokinase region; it reads MILSSSLRPT…EYLHSSHQGE (321 aa). 198-201 is a binding site for ATP; sequence NKKE. Asp-266 is a catalytic residue. Residues 348-474 are cytidylyltransferase; the sequence is FTNGCFDILH…SAVVKKIQGS (127 aa).

The protein in the N-terminal section; belongs to the carbohydrate kinase PfkB family. In the C-terminal section; belongs to the cytidylyltransferase family. In terms of assembly, homodimer.

It catalyses the reaction D-glycero-beta-D-manno-heptose 7-phosphate + ATP = D-glycero-beta-D-manno-heptose 1,7-bisphosphate + ADP + H(+). It carries out the reaction D-glycero-beta-D-manno-heptose 1-phosphate + ATP + H(+) = ADP-D-glycero-beta-D-manno-heptose + diphosphate. It functions in the pathway nucleotide-sugar biosynthesis; ADP-L-glycero-beta-D-manno-heptose biosynthesis; ADP-L-glycero-beta-D-manno-heptose from D-glycero-beta-D-manno-heptose 7-phosphate: step 1/4. The protein operates within nucleotide-sugar biosynthesis; ADP-L-glycero-beta-D-manno-heptose biosynthesis; ADP-L-glycero-beta-D-manno-heptose from D-glycero-beta-D-manno-heptose 7-phosphate: step 3/4. Its function is as follows. Catalyzes the phosphorylation of D-glycero-D-manno-heptose 7-phosphate at the C-1 position to selectively form D-glycero-beta-D-manno-heptose-1,7-bisphosphate. Catalyzes the ADP transfer from ATP to D-glycero-beta-D-manno-heptose 1-phosphate, yielding ADP-D-glycero-beta-D-manno-heptose. The protein is Bifunctional protein HldE of Wolinella succinogenes (strain ATCC 29543 / DSM 1740 / CCUG 13145 / JCM 31913 / LMG 7466 / NCTC 11488 / FDC 602W) (Vibrio succinogenes).